The following is a 190-amino-acid chain: T-cell receptor gamma chain C region 5/10-13 (190 aa).

The c region stretch occupies residues 1–157 (DKRTDSDFSP…LQVTTTYAFY (157 aa)). Residues 158–178 (TYLILFFKSMVHLAFVVFCLF) traverse the membrane as a helical segment. The Cytoplasmic segment spans residues 179–190 (RRAAMSCDDQRS).

The protein resides in the membrane. The protein is T-cell receptor gamma chain C region 5/10-13 of Mus musculus (Mouse).